Reading from the N-terminus, the 504-residue chain is DnaJ homolog subfamily C member 3 (504 aa).

Residues 1–31 (MVAPGSVTSRLGSVFPFLLVLVDLQYEGAEC) form the signal peptide. TPR repeat units lie at residues 37–70 (VEKH…DPDN), 72–104 (IAYY…KMDF), 105–138 (TAAR…NPSE), 154–187 (MQRL…CVWD), 189–221 (ELRE…KNDN), 222–255 (TEAF…DQDH), 268–301 (LNKL…EPGV), 306–339 (IRSK…EPDN), and 340–373 (VNAL…NEND). A disulfide bridge links cysteine 248 with cysteine 258. Position 274 is a phosphoserine (serine 274). A disulfide bridge connects residues cysteine 313 and cysteine 329. Residues 375–393 (QIREGLEKAQRLLKQSQRR) are flexible linker. Residues 394 to 462 (DYYKILGVKR…EMRKKFDDGE (69 aa)) form the J domain. The tract at residues 451 to 481 (DPEMRKKFDDGEDPLDAESQQGGGGNPFHRS) is disordered.

As to quaternary structure, interacts with EIF2AK4/GCN2; this interaction occurs under endoplasmic reticulum (ER) stress, hypothermic and amino acid starving stress conditions and inhibits EIF2AK4/GCN2 kinase activity. Interacts with EIF2AK3. Interacts with EIF2AK2. Forms a trimeric complex with DNAJB1 and HSPA8. Interacts with THAP12.

It localises to the endoplasmic reticulum. Involved in the unfolded protein response (UPR) during endoplasmic reticulum (ER) stress. Acts as a negative regulator of the EIF2AK4/GCN2 kinase activity by preventing the phosphorylation of eIF-2-alpha at 'Ser-52' and hence attenuating general protein synthesis under ER stress, hypothermic and amino acid starving stress conditions. Co-chaperone of HSPA8/HSC70, it stimulates its ATPase activity. May inhibit both the autophosphorylation of EIF2AK2/PKR and the ability of EIF2AK2 to catalyze phosphorylation of the EIF2A. May inhibit EIF2AK3/PERK activity. This chain is DnaJ homolog subfamily C member 3 (DNAJC3), found in Bos taurus (Bovine).